We begin with the raw amino-acid sequence, 590 residues long: Aspartate--tRNA ligase (590 aa).

E174 is a binding site for L-aspartate. The interval 198-201 is aspartate; that stretch reads QLMK. R220 contributes to the L-aspartate binding site. Residues 220-222 and Q229 contribute to the ATP site; that span reads RDE. H443 is an L-aspartate binding site. E484 is a binding site for ATP. R491 is a binding site for L-aspartate. 536–539 serves as a coordination point for ATP; that stretch reads GLDR.

The protein belongs to the class-II aminoacyl-tRNA synthetase family. Type 1 subfamily. In terms of assembly, homodimer.

The protein localises to the cytoplasm. It carries out the reaction tRNA(Asp) + L-aspartate + ATP = L-aspartyl-tRNA(Asp) + AMP + diphosphate. Its function is as follows. Catalyzes the attachment of L-aspartate to tRNA(Asp) in a two-step reaction: L-aspartate is first activated by ATP to form Asp-AMP and then transferred to the acceptor end of tRNA(Asp). The polypeptide is Aspartate--tRNA ligase (Lactococcus lactis subsp. cremoris (strain SK11)).